We begin with the raw amino-acid sequence, 755 residues long: Protein phosphatase 1E (755 aa).

The disordered stretch occupies residues 21-131 (EFRGPCGGGE…PPLPPLPRPL (111 aa)). Tandem repeats lie at residues 31–32 (PE), 33–34 (PE), 35–36 (PE), 37–38 (PE), 39–40 (PE), 41–42 (PE), and 43–44 (PE). Residues 31-52 (PEPEPEPEPEPEPESEPEPEPE) form an 11 X 2 AA tandem repeats of P-E region. Composition is skewed to acidic residues over residues 31–68 (PEPE…EPGE) and 77–101 (EEGD…EEEG). The 8; approximate repeat unit spans residues 45–46 (SE). 3 repeat units span residues 47-48 (PE), 49-50 (PE), and 51-52 (PE). Over residues 102-113 (AATAAAAPGHSA) the composition is skewed to low complexity. The span at 114 to 129 (VPPPPPQLPPLPPLPR) shows a compositional bias: pro residues. Residues 231 to 488 (ETSIHAIKNM…DNITVIVVFL (258 aa)) enclose the PPM-type phosphatase domain. Aspartate 273, glycine 274, aspartate 435, and aspartate 479 together coordinate Mn(2+). The interval 498-537 (SEESDWTENSFQGGQEDGGDDKENHGECKRPWPQHQCSAP) is disordered. Positions 518 to 527 (DKENHGECKR) are enriched in basic and acidic residues. A phosphoserine mark is found at serine 535 and serine 548.

The protein belongs to the PP2C family. In terms of assembly, heterotrimer. Interacts with PAX1 and ARHGEF6 (or ARHGEF7). The cofactor is Mg(2+). Mn(2+) serves as cofactor.

The protein localises to the nucleus. Its subcellular location is the cytoplasm. It carries out the reaction O-phospho-L-seryl-[protein] + H2O = L-seryl-[protein] + phosphate. It catalyses the reaction O-phospho-L-threonyl-[protein] + H2O = L-threonyl-[protein] + phosphate. Protein phosphatase that inactivates multifunctional CaM kinases such as CAMK4 and CAMK2. Dephosphorylates and inactivates PAK. May play a role in the inhibition of actin fiber stress breakdown and in morphological changes driven by TNK2/CDC42. Dephosphorylates PRKAA2. The chain is Protein phosphatase 1E (PPM1E) from Homo sapiens (Human).